The primary structure comprises 406 residues: Beta-galactoside alpha-2,6-sialyltransferase 1 (406 aa).

Over 1–9 the chain is Cytoplasmic; it reads MIHTNLKKK. The helical; Signal-anchor for type II membrane protein transmembrane segment at 10-26 threads the bilayer; that stretch reads FSCCVLVFLLFAVICVW. Residues 27–406 are Lumenal-facing; it reads KEKKKGSYYD…TLPGFRTIHC (380 aa). 3 disulfides stabilise this stretch: cysteine 142–cysteine 406, cysteine 184–cysteine 335, and cysteine 353–cysteine 364. 2 N-linked (GlcNAc...) asparagine glycosylation sites follow: asparagine 149 and asparagine 161. Substrate is bound by residues serine 189, asparagine 212, asparagine 233, 322–324, cysteine 353, tyrosine 354, threonine 365, tyrosine 369, histidine 370, and lysine 376; that span reads SSG. Tyrosine 369 bears the Phosphotyrosine mark.

The protein belongs to the glycosyltransferase 29 family. In terms of assembly, monomer and homodimer. Post-translationally, N-glycosylated.

Its subcellular location is the golgi apparatus. The protein resides in the golgi stack membrane. It localises to the secreted. The enzyme catalyses a beta-D-galactoside + CMP-N-acetyl-beta-neuraminate = an N-acetyl-alpha-neuraminyl-(2-&gt;6)-beta-D-galactosyl derivative + CMP + H(+). The protein operates within protein modification; protein glycosylation. Its activity is regulated as follows. Inhibited by CTP. Transfers sialic acid from CMP-sialic acid to galactose-containing acceptor substrates. In B lymphocytes, generates neuraminidase-sensitive lymphocyte cell-surface differentiation antigens, such as CDw75, HB-6 and CD76. The sequence is that of Beta-galactoside alpha-2,6-sialyltransferase 1 (ST6GAL1) from Homo sapiens (Human).